A 186-amino-acid chain; its full sequence is Interferon beta (186 aa).

Residues 1–21 form the signal peptide; that stretch reads MTYRWILPMALLLCFSTTALS. Tyr24 is modified (phosphotyrosine). An intrachain disulfide couples Cys52 to Cys161. Asn101 and Asn136 each carry an N-linked (GlcNAc...) asparagine glycan.

It belongs to the alpha/beta interferon family. Monomer.

Its subcellular location is the secreted. Functionally, type I interferon cytokine that plays a key role in the innate immune response to infection, developing tumors and other inflammatory stimuli. Signals via binding to high-affinity (IFNAR2) and low-affinity (IFNAR1) heterodimeric receptor, activating the canonical Jak-STAT signaling pathway resulting in transcriptional activation or repression of interferon-regulated genes that encode the effectors of the interferon response, such as antiviral proteins, regulators of cell proliferation and differentiation, and immunoregulatory proteins. Signals mostly via binding to a IFNAR1-IFNAR2 heterodimeric receptor, but can also function with IFNAR1 alone and independently of Jak-STAT pathways. Elicits a wide variety of responses, including antiviral and antibacterial activities, and can regulate the development of B-cells, myelopoiesis and lipopolysaccharide (LPS)-inducible production of tumor necrosis factor. Plays a role in neuronal homeostasis by regulating dopamine turnover and protecting dopaminergic neurons: acts by promoting neuronal autophagy and alpha-synuclein clearance, thereby preventing dopaminergic neuron loss. IFNB1 is more potent than interferon-alpha (IFN-alpha) in inducing the apoptotic and antiproliferative pathways required for control of tumor cell growth. The chain is Interferon beta (IFNB1) from Equus caballus (Horse).